The chain runs to 280 residues: Pantothenate synthetase (280 aa).

Position 31–38 (31–38) interacts with ATP; sequence MGNLHVGH. The active-site Proton donor is the H38. A (R)-pantoate-binding site is contributed by Q62. Q62 lines the beta-alanine pocket. 150-153 contacts ATP; sequence GKKD. Q156 provides a ligand contact to (R)-pantoate. ATP is bound by residues V179 and 187-190; that span reads MSSR.

Belongs to the pantothenate synthetase family. In terms of assembly, homodimer.

Its subcellular location is the cytoplasm. The catalysed reaction is (R)-pantoate + beta-alanine + ATP = (R)-pantothenate + AMP + diphosphate + H(+). The protein operates within cofactor biosynthesis; (R)-pantothenate biosynthesis; (R)-pantothenate from (R)-pantoate and beta-alanine: step 1/1. Its function is as follows. Catalyzes the condensation of pantoate with beta-alanine in an ATP-dependent reaction via a pantoyl-adenylate intermediate. In Xanthomonas oryzae pv. oryzae (strain KACC10331 / KXO85), this protein is Pantothenate synthetase.